The primary structure comprises 673 residues: Glycine--tRNA ligase beta subunit (673 aa).

The protein belongs to the class-II aminoacyl-tRNA synthetase family. As to quaternary structure, tetramer of two alpha and two beta subunits.

Its subcellular location is the cytoplasm. It carries out the reaction tRNA(Gly) + glycine + ATP = glycyl-tRNA(Gly) + AMP + diphosphate. This chain is Glycine--tRNA ligase beta subunit, found in Lactococcus lactis subsp. cremoris (strain MG1363).